A 386-amino-acid polypeptide reads, in one-letter code: Zinc finger CCCH domain-containing protein 2 (386 aa).

2 C3H1-type zinc fingers span residues 116 to 143 and 151 to 175; these read HYSG…HGVF and RYRT…HTPD. 2 disordered regions span residues 180-200 and 220-252; these read LPAQ…ESYD and SSPT…RRGS. Positions 182–192 are enriched in polar residues; the sequence is AQQSSPRSVAS. Low complexity predominate over residues 220-229; sequence SSPTSTLMSP. Positions 230–241 are enriched in pro residues; that stretch reads PKSPPSESPPLS.

Its subcellular location is the nucleus. Involved in leaf senescence delay. May repress jasmonic acid (JA) signaling role in promoting leaf senescence. May regulate panicle development and pollination/fertilization process. The sequence is that of Zinc finger CCCH domain-containing protein 2 from Oryza sativa subsp. japonica (Rice).